Here is a 914-residue protein sequence, read N- to C-terminus: Valine--tRNA ligase (914 aa).

The 'HIGH' region signature appears at 45–55 (PNVTGSLHMGH). The 'KMSKS' region signature appears at 538–542 (KMSKS). An ATP-binding site is contributed by Lys-541. Residues 847–914 (LVDLDALKGR…LARKRLADLS (68 aa)) are a coiled coil.

This sequence belongs to the class-I aminoacyl-tRNA synthetase family. ValS type 1 subfamily. In terms of assembly, monomer.

The protein localises to the cytoplasm. The enzyme catalyses tRNA(Val) + L-valine + ATP = L-valyl-tRNA(Val) + AMP + diphosphate. Its function is as follows. Catalyzes the attachment of valine to tRNA(Val). As ValRS can inadvertently accommodate and process structurally similar amino acids such as threonine, to avoid such errors, it has a 'posttransfer' editing activity that hydrolyzes mischarged Thr-tRNA(Val) in a tRNA-dependent manner. The sequence is that of Valine--tRNA ligase from Parasynechococcus marenigrum (strain WH8102).